The following is a 115-amino-acid chain: Type 3 secretion system chaperone YscG (115 aa).

This sequence belongs to the YscG family. Component of the heterodimeric YscE-YscG chaperone. The YscE-YscG chaperone forms a stable ternary complex with YscF/SctF.

Its subcellular location is the cytoplasm. Chaperone of the type III secretion system (T3SS), also called injectisome, which is used to inject bacterial effector proteins into eukaryotic host cells. Along with YscE, prevents premature polymerization of the YscF/SctF needle protein within the cytoplasm. Required for Yop secretion. In Yersinia enterocolitica, this protein is Type 3 secretion system chaperone YscG.